We begin with the raw amino-acid sequence, 235 residues long: Ribonuclease 3 (235 aa).

The region spanning leucine 7–glycine 134 is the RNase III domain. Glutamate 47 is a Mg(2+) binding site. Aspartate 51 is an active-site residue. 2 residues coordinate Mg(2+): aspartate 120 and glutamate 123. Residue glutamate 123 is part of the active site. A DRBM domain is found at aspartate 161–valine 230.

Belongs to the ribonuclease III family. As to quaternary structure, homodimer. Mg(2+) serves as cofactor.

It localises to the cytoplasm. It carries out the reaction Endonucleolytic cleavage to 5'-phosphomonoester.. Functionally, digests double-stranded RNA. Involved in the processing of primary rRNA transcript to yield the immediate precursors to the large and small rRNAs (23S and 16S). Processes some mRNAs, and tRNAs when they are encoded in the rRNA operon. Processes pre-crRNA and tracrRNA of type II CRISPR loci if present in the organism. This is Ribonuclease 3 from Clostridium tetani (strain Massachusetts / E88).